A 61-amino-acid polypeptide reads, in one-letter code: Large ribosomal subunit protein uL30 (61 aa).

It belongs to the universal ribosomal protein uL30 family. As to quaternary structure, part of the 50S ribosomal subunit.

The polypeptide is Large ribosomal subunit protein uL30 (Treponema denticola (strain ATCC 35405 / DSM 14222 / CIP 103919 / JCM 8153 / KCTC 15104)).